The sequence spans 348 residues: Probable dual-specificity RNA methyltransferase RlmN (348 aa).

The active-site Proton acceptor is the E93. The region spanning 99 to 323 is the Radical SAM core domain; sequence TEKRLTACLS…QTRLSNSGIN (225 aa). Residues C106 and C338 are joined by a disulfide bond. [4Fe-4S] cluster-binding residues include C113, C117, and C120. S-adenosyl-L-methionine contacts are provided by residues 160–161, S190, 219–221, and N295; these read GE and SLH. C338 functions as the S-methylcysteine intermediate in the catalytic mechanism.

Belongs to the radical SAM superfamily. RlmN family. The cofactor is [4Fe-4S] cluster.

It is found in the cytoplasm. The enzyme catalyses adenosine(2503) in 23S rRNA + 2 reduced [2Fe-2S]-[ferredoxin] + 2 S-adenosyl-L-methionine = 2-methyladenosine(2503) in 23S rRNA + 5'-deoxyadenosine + L-methionine + 2 oxidized [2Fe-2S]-[ferredoxin] + S-adenosyl-L-homocysteine. It catalyses the reaction adenosine(37) in tRNA + 2 reduced [2Fe-2S]-[ferredoxin] + 2 S-adenosyl-L-methionine = 2-methyladenosine(37) in tRNA + 5'-deoxyadenosine + L-methionine + 2 oxidized [2Fe-2S]-[ferredoxin] + S-adenosyl-L-homocysteine. Its function is as follows. Specifically methylates position 2 of adenine 2503 in 23S rRNA and position 2 of adenine 37 in tRNAs. This chain is Probable dual-specificity RNA methyltransferase RlmN, found in Prochlorococcus marinus subsp. pastoris (strain CCMP1986 / NIES-2087 / MED4).